The chain runs to 529 residues: UDP-glucuronosyltransferase 2B11 (529 aa).

Positions 1 to 21 are cleaved as a signal peptide; the sequence is MTLKWTSVLLLIHLSCYFSSG. Lys-135 carries the N6-succinyllysine modification. N-linked (GlcNAc...) asparagine glycosylation is present at Asn-315. A helical transmembrane segment spans residues 493 to 513; sequence VIGFLLACVATVIFIITKFCL.

Belongs to the UDP-glycosyltransferase family. As to expression, widely expressed.

It is found in the microsome membrane. Its subcellular location is the endoplasmic reticulum membrane. The enzyme catalyses glucuronate acceptor + UDP-alpha-D-glucuronate = acceptor beta-D-glucuronoside + UDP + H(+). UDPGT is of major importance in the conjugation and subsequent elimination of potentially toxic xenobiotics and endogenous compounds. This is UDP-glucuronosyltransferase 2B11 (UGT2B11) from Homo sapiens (Human).